Consider the following 309-residue polypeptide: L-2-keto-3-deoxyarabonate dehydratase (309 aa).

K171 (schiff-base intermediate with substrate) is an active-site residue.

This sequence belongs to the DapA family. Homodimer.

It carries out the reaction 2-dehydro-3-deoxy-L-arabinonate = 2,5-dioxopentanoate + H2O. Its function is as follows. Catalyzes the dehydration of L-2-keto-3-deoxyarabonate (L-KDA) to alpha-ketoglutaric semialdehyde (alphaKGSA). Is involved in a degradation pathway of L-arabinose that allows A.brasilense to grow on L-arabinose as a sole carbon source. The chain is L-2-keto-3-deoxyarabonate dehydratase (araD) from Azospirillum brasilense.